A 778-amino-acid chain; its full sequence is Ribosome biogenesis protein BOP1 homolog (778 aa).

A compositionally biased stretch (basic residues) spans 1 to 10; that stretch reads MAKKQDRKRK. Positions 1-152 are disordered; that stretch reads MAKKQDRKRK…DSDTSDEEDI (152 aa). Composition is skewed to acidic residues over residues 44–53, 60–72, and 84–105; these read EDSTDDEGID, SSED…DEEG, and SSDE…DEEE. The segment covering 114–124 has biased composition (polar residues); that stretch reads TTSSKAETNNE. Acidic residues predominate over residues 142-151; that stretch reads EDSDTSDEED. WD repeat units lie at residues 438-479, 481-519, 564-606, 609-647, 650-689, 693-732, and 748-778; these read GHTD…RTIE, EDVV…KLLI, NHFK…SQIP, KSKG…LIKK, TNSK…KPYQ, LHRN…DLLQ, and RDDF…RLYT.

It belongs to the WD repeat BOP1/ERB1 family.

It localises to the nucleus. The protein localises to the nucleolus. Its subcellular location is the nucleoplasm. Required for maturation of ribosomal RNAs and formation of the large ribosomal subunit. The chain is Ribosome biogenesis protein BOP1 homolog from Drosophila willistoni (Fruit fly).